Reading from the N-terminus, the 509-residue chain is ATP synthase subunit alpha (509 aa).

Glycine 169–threonine 176 is a binding site for ATP.

Belongs to the ATPase alpha/beta chains family. As to quaternary structure, F-type ATPases have 2 components, CF(1) - the catalytic core - and CF(0) - the membrane proton channel. CF(1) has five subunits: alpha(3), beta(3), gamma(1), delta(1), epsilon(1). CF(0) has three main subunits: a(1), b(2) and c(9-12). The alpha and beta chains form an alternating ring which encloses part of the gamma chain. CF(1) is attached to CF(0) by a central stalk formed by the gamma and epsilon chains, while a peripheral stalk is formed by the delta and b chains.

It is found in the cell inner membrane. The enzyme catalyses ATP + H2O + 4 H(+)(in) = ADP + phosphate + 5 H(+)(out). Produces ATP from ADP in the presence of a proton gradient across the membrane. The alpha chain is a regulatory subunit. The chain is ATP synthase subunit alpha from Methylorubrum extorquens (strain CM4 / NCIMB 13688) (Methylobacterium extorquens).